The primary structure comprises 719 residues: Ribosomal RNA large subunit methyltransferase K/L (719 aa).

The 112-residue stretch at 43-154 folds into the THUMP domain; that stretch reads TQYRVLLWTR…REELVISLDL (112 aa).

The protein belongs to the methyltransferase superfamily. RlmKL family.

It localises to the cytoplasm. It carries out the reaction guanosine(2445) in 23S rRNA + S-adenosyl-L-methionine = N(2)-methylguanosine(2445) in 23S rRNA + S-adenosyl-L-homocysteine + H(+). The enzyme catalyses guanosine(2069) in 23S rRNA + S-adenosyl-L-methionine = N(2)-methylguanosine(2069) in 23S rRNA + S-adenosyl-L-homocysteine + H(+). In terms of biological role, specifically methylates the guanine in position 2445 (m2G2445) and the guanine in position 2069 (m7G2069) of 23S rRNA. This is Ribosomal RNA large subunit methyltransferase K/L from Pasteurella multocida (strain Pm70).